Consider the following 328-residue polypeptide: Ornithine carbamoyltransferase, catabolic (328 aa).

Carbamoyl phosphate-binding positions include 56 to 59 (STRT), Q83, R107, and 134 to 137 (HPTQ). L-ornithine is bound by residues N166, D230, and 234 to 235 (SM). Carbamoyl phosphate contacts are provided by residues 270-271 (CL) and R315.

This sequence belongs to the aspartate/ornithine carbamoyltransferase superfamily. OTCase family.

The protein localises to the cytoplasm. The catalysed reaction is carbamoyl phosphate + L-ornithine = L-citrulline + phosphate + H(+). The protein operates within amino-acid degradation; L-arginine degradation via ADI pathway; carbamoyl phosphate from L-arginine: step 2/2. In terms of biological role, reversibly catalyzes the transfer of the carbamoyl group from carbamoyl phosphate (CP) to the N(epsilon) atom of ornithine (ORN) to produce L-citrulline. This chain is Ornithine carbamoyltransferase, catabolic (arcB), found in Borreliella afzelii (Borrelia afzelii).